Reading from the N-terminus, the 274-residue chain is Trypsin-1 (274 aa).

An N-terminal signal peptide occupies residues 1–18 (MSNKIAILLAVLVAVVAC). A propeptide spans 19-47 (AEAQANQRHRLVRPSPSFSPRPRYAVGQR) (activation peptide). Positions 48 to 273 (IVGGFEIDVS…VRDWVRENSG (226 aa)) constitute a Peptidase S1 domain. A disulfide bridge connects residues C73 and C89. Active-site charge relay system residues include H88 and D133. 2 cysteine pairs are disulfide-bonded: C198–C214 and C225–C249. The active-site Charge relay system is the S229.

The protein belongs to the peptidase S1 family. As to expression, constitutively expressed at low level in the gut of adult females. Also expressed in the gut of male and female pupae.

The protein localises to the secreted. It carries out the reaction Preferential cleavage: Arg-|-Xaa, Lys-|-Xaa.. Its function is as follows. Major function may be to aid in digestion of the blood meal. The chain is Trypsin-1 (TRYP1) from Anopheles gambiae (African malaria mosquito).